The sequence spans 185 residues: Small ribosomal subunit protein bS6 (185 aa).

Basic and acidic residues predominate over residues 115 to 141 (AAQKAAAEKAEAARLEAEKAAEEEAAK). A disordered region spans residues 115 to 185 (AAQKAAAEKA…EEPKSDEEDA (71 aa)). Over residues 142–169 (AAEAQAKEAPAAEAPAEEAPAAEAPAEA) the composition is skewed to low complexity. The segment covering 170-185 (PAEEPAEEPKSDEEDA) has biased composition (acidic residues).

This sequence belongs to the bacterial ribosomal protein bS6 family.

Binds together with bS18 to 16S ribosomal RNA. The chain is Small ribosomal subunit protein bS6 from Desulfatibacillum aliphaticivorans.